The sequence spans 416 residues: UDP-N-acetylglucosamine 1-carboxyvinyltransferase (416 aa).

22–23 serves as a coordination point for phosphoenolpyruvate; that stretch reads KN. Arg91 is a binding site for UDP-N-acetyl-alpha-D-glucosamine. Cys115 (proton donor) is an active-site residue. Cys115 carries the 2-(S-cysteinyl)pyruvic acid O-phosphothioketal modification. UDP-N-acetyl-alpha-D-glucosamine contacts are provided by residues 120–124, Asp305, and Ile327; that span reads RPIDL.

The protein belongs to the EPSP synthase family. MurA subfamily.

It localises to the cytoplasm. The catalysed reaction is phosphoenolpyruvate + UDP-N-acetyl-alpha-D-glucosamine = UDP-N-acetyl-3-O-(1-carboxyvinyl)-alpha-D-glucosamine + phosphate. Its pathway is cell wall biogenesis; peptidoglycan biosynthesis. Its function is as follows. Cell wall formation. Adds enolpyruvyl to UDP-N-acetylglucosamine. This chain is UDP-N-acetylglucosamine 1-carboxyvinyltransferase, found in Buchnera aphidicola subsp. Acyrthosiphon pisum (strain APS) (Acyrthosiphon pisum symbiotic bacterium).